The primary structure comprises 1000 residues: Ribosome assembly protein 1 (1000 aa).

Residues 17-246 (ENIRNFTLLA…YEKKLGLKQK (230 aa)) form the tr-type G domain. GTP is bound by residues 26-33 (AHVDHGKT), 100-104 (DSPGH), and 154-157 (NKMD).

The protein belongs to the TRAFAC class translation factor GTPase superfamily. Classic translation factor GTPase family.

It localises to the cytoplasm. It carries out the reaction GTP + H2O = GDP + phosphate + H(+). GTPase activity is stimulated in the presence of 60S subunits. Functionally, GTPase involved in the biogenesis of the 60S ribosomal subunit and translational activation of ribosomes. Together with sdo1, may trigger the GTP-dependent release of tif6 from 60S pre-ribosomes in the cytoplasm, thereby activating ribosomes for translation competence by allowing 80S ribosome assembly and facilitating tif6 recycling to the nucleus, where it is required for 60S rRNA processing and nuclear export. Inhibits GTPase activity of ribosome-bound EF-2. This Schizosaccharomyces pombe (strain 972 / ATCC 24843) (Fission yeast) protein is Ribosome assembly protein 1 (ria1).